The following is a 317-amino-acid chain: Serpentine receptor class delta-47 (317 aa).

Transmembrane regions (helical) follow at residues isoleucine 8–valine 28, valine 42–leucine 62, cysteine 89–isoleucine 109, isoleucine 128–valine 148, tyrosine 185–threonine 205, alanine 239–threonine 259, and isoleucine 270–alanine 290.

It belongs to the nematode receptor-like protein srd family.

The protein localises to the membrane. This is Serpentine receptor class delta-47 (srd-47) from Caenorhabditis elegans.